Reading from the N-terminus, the 211-residue chain is Endonuclease III (211 aa).

A HhH domain is found at 108–127 (REALEALAGVGRKTANVVLN). [4Fe-4S] cluster contacts are provided by cysteine 187, cysteine 194, cysteine 197, and cysteine 203.

Belongs to the Nth/MutY family. [4Fe-4S] cluster serves as cofactor.

It carries out the reaction 2'-deoxyribonucleotide-(2'-deoxyribose 5'-phosphate)-2'-deoxyribonucleotide-DNA = a 3'-end 2'-deoxyribonucleotide-(2,3-dehydro-2,3-deoxyribose 5'-phosphate)-DNA + a 5'-end 5'-phospho-2'-deoxyribonucleoside-DNA + H(+). Its function is as follows. DNA repair enzyme that has both DNA N-glycosylase activity and AP-lyase activity. The DNA N-glycosylase activity releases various damaged pyrimidines from DNA by cleaving the N-glycosidic bond, leaving an AP (apurinic/apyrimidinic) site. The AP-lyase activity cleaves the phosphodiester bond 3' to the AP site by a beta-elimination, leaving a 3'-terminal unsaturated sugar and a product with a terminal 5'-phosphate. The protein is Endonuclease III of Haemophilus influenzae (strain ATCC 51907 / DSM 11121 / KW20 / Rd).